Consider the following 246-residue polypeptide: Metallo-beta-lactamase IMP-1 (246 aa).

Residues 1–18 (MSKLSVFFIFLFCSIATA) form the signal peptide. Zn(2+)-binding residues include His95, His97, Asp99, His157, and Cys176. 2 residues coordinate a beta-lactam: Lys179 and Asn185. Residue His215 participates in Zn(2+) binding.

The protein belongs to the metallo-beta-lactamase superfamily. Class-B beta-lactamase family. As to quaternary structure, monomer. Requires Zn(2+) as cofactor.

It is found in the periplasm. It carries out the reaction a beta-lactam + H2O = a substituted beta-amino acid. With respect to regulation, inhibited by captopril stereoisomers, Hg(2+), Fe(2+), Cu(2+), chelating agents such as EDTA, dansyl derivatives, including dansyl-C4SH, bisthiazolidines, mercaptoacetic acid and by PMPC phosphonates. Inhibited by 3-(3-mercaptopropionylsulfanyl)-propionic acid pentafluorophenyl ester, via a covalent binding to Lys-179. Not susceptible to inactivation by the beta-lactamase-blocking agents clavulanic acid or cloxacillin. Functionally, class B beta-lactamase which confers resistance to the beta-lactam antibiotics, including penicillins, cephalosporins and carbapenems. Acts via hydrolysis of the beta-lactam ring. Has penicillin-, cephalosporin- and carbapenem-hydrolyzing activities. Has endoribonuclease activity, cleaving substrate RNAs preferentially between U/C and A, in vitro. The sequence is that of Metallo-beta-lactamase IMP-1 from Serratia marcescens.